The following is a 315-amino-acid chain: Gamma-hemolysin component C (315 aa).

Positions M1–A29 are cleaved as a signal peptide.

Belongs to the aerolysin family. Toxicity requires sequential binding and synergistic association of a class S and a class F component which form heterooligomeric complexes. HlgC (class S) associates with HlgB (class F) thus forming an CB toxin.

In terms of biological role, toxin that seems to act by forming pores in the membrane of the cell. Has a hemolytic and a leucotoxic activity. The chain is Gamma-hemolysin component C (hlgC) from Staphylococcus aureus (strain COL).